We begin with the raw amino-acid sequence, 229 residues long: Large ribosomal subunit protein uL1 (229 aa).

It belongs to the universal ribosomal protein uL1 family. In terms of assembly, part of the 50S ribosomal subunit.

In terms of biological role, binds directly to 23S rRNA. The L1 stalk is quite mobile in the ribosome, and is involved in E site tRNA release. Functionally, protein L1 is also a translational repressor protein, it controls the translation of the L11 operon by binding to its mRNA. This chain is Large ribosomal subunit protein uL1, found in Streptococcus sanguinis (strain SK36).